A 119-amino-acid polypeptide reads, in one-letter code: RIIa domain-containing protein 1 (119 aa).

Residues Lys-70–Leu-104 enclose the RIIa domain.

Abundant in tissues rich in highly ciliated cells, such as testis, trachea and olfactory epithelium.

The protein is RIIa domain-containing protein 1 (Riiad1) of Mus musculus (Mouse).